We begin with the raw amino-acid sequence, 133 residues long: Large ribosomal subunit protein uL14 (133 aa).

Belongs to the universal ribosomal protein uL14 family. Part of the 50S ribosomal subunit. Forms a cluster with proteins L3 and L24e, part of which may contact the 16S rRNA in 2 intersubunit bridges.

Its function is as follows. Binds to 23S rRNA. Forms part of two intersubunit bridges in the 70S ribosome. The sequence is that of Large ribosomal subunit protein uL14 from Nanoarchaeum equitans (strain Kin4-M).